The sequence spans 122 residues: Large ribosomal subunit protein uL14 (122 aa).

Belongs to the universal ribosomal protein uL14 family. In terms of assembly, part of the 50S ribosomal subunit. Forms a cluster with proteins L3 and L19. In the 70S ribosome, L14 and L19 interact and together make contacts with the 16S rRNA in bridges B5 and B8.

Its function is as follows. Binds to 23S rRNA. Forms part of two intersubunit bridges in the 70S ribosome. This chain is Large ribosomal subunit protein uL14, found in Exiguobacterium sibiricum (strain DSM 17290 / CCUG 55495 / CIP 109462 / JCM 13490 / 255-15).